The sequence spans 63 residues: Large ribosomal subunit protein bL35 (63 aa).

Composition is skewed to basic residues over residues 1 to 25 (MPKM…KHRQ) and 32 to 47 (LTKK…RPKK). Residues 1–55 (MPKMKSKSSAAKRFKKTANGFKHRQSFTSHILTKKSTKRKRHLRPKKQVNPSDVP) are disordered.

This sequence belongs to the bacterial ribosomal protein bL35 family.

The protein is Large ribosomal subunit protein bL35 of Hahella chejuensis (strain KCTC 2396).